A 313-amino-acid chain; its full sequence is D-alanine--D-alanine ligase (313 aa).

Residues 108 to 308 (KLVWQQTGVP…YSELVVKVLS (201 aa)) form the ATP-grasp domain. Residue 138 to 193 (VAKLGLPLFVKPASEGSSVAVLKVKTADALPAALAEAATHDKIVIVEKSIEGGGEY) participates in ATP binding. Residues aspartate 262, glutamate 275, and asparagine 277 each contribute to the Mg(2+) site.

It belongs to the D-alanine--D-alanine ligase family. It depends on Mg(2+) as a cofactor. Mn(2+) serves as cofactor.

Its subcellular location is the cytoplasm. The enzyme catalyses 2 D-alanine + ATP = D-alanyl-D-alanine + ADP + phosphate + H(+). The protein operates within cell wall biogenesis; peptidoglycan biosynthesis. Its function is as follows. Cell wall formation. The polypeptide is D-alanine--D-alanine ligase (Burkholderia cenocepacia (strain HI2424)).